Reading from the N-terminus, the 151-residue chain is Large ribosomal subunit protein uL13 (151 aa).

The protein belongs to the universal ribosomal protein uL13 family. Part of the 50S ribosomal subunit.

In terms of biological role, this protein is one of the early assembly proteins of the 50S ribosomal subunit, although it is not seen to bind rRNA by itself. It is important during the early stages of 50S assembly. This Synechococcus sp. (strain JA-2-3B'a(2-13)) (Cyanobacteria bacterium Yellowstone B-Prime) protein is Large ribosomal subunit protein uL13.